Consider the following 251-residue polypeptide: Triosephosphate isomerase (251 aa).

Residue 9–11 participates in substrate binding; sequence NWK. The active-site Electrophile is His-94. The active-site Proton acceptor is the Glu-166. Substrate is bound by residues Gly-172, Ser-211, and 232-233; that span reads GG.

The protein belongs to the triosephosphate isomerase family. In terms of assembly, homodimer.

It is found in the cytoplasm. The catalysed reaction is D-glyceraldehyde 3-phosphate = dihydroxyacetone phosphate. It participates in carbohydrate biosynthesis; gluconeogenesis. Its pathway is carbohydrate degradation; glycolysis; D-glyceraldehyde 3-phosphate from glycerone phosphate: step 1/1. Functionally, involved in the gluconeogenesis. Catalyzes stereospecifically the conversion of dihydroxyacetone phosphate (DHAP) to D-glyceraldehyde-3-phosphate (G3P). In Xanthomonas oryzae pv. oryzae (strain MAFF 311018), this protein is Triosephosphate isomerase.